A 303-amino-acid chain; its full sequence is 4-hydroxy-3-methylbut-2-enyl diphosphate reductase (303 aa).

Cys-12 provides a ligand contact to [4Fe-4S] cluster. (2E)-4-hydroxy-3-methylbut-2-enyl diphosphate contacts are provided by His-42 and His-75. 2 residues coordinate dimethylallyl diphosphate: His-42 and His-75. Isopentenyl diphosphate-binding residues include His-42 and His-75. A [4Fe-4S] cluster-binding site is contributed by Cys-97. Residue His-125 coordinates (2E)-4-hydroxy-3-methylbut-2-enyl diphosphate. A dimethylallyl diphosphate-binding site is contributed by His-125. Isopentenyl diphosphate is bound at residue His-125. Glu-127 serves as the catalytic Proton donor. Ser-164 is a (2E)-4-hydroxy-3-methylbut-2-enyl diphosphate binding site. Residue Cys-192 participates in [4Fe-4S] cluster binding. (2E)-4-hydroxy-3-methylbut-2-enyl diphosphate contacts are provided by Ser-220, Ser-221, Asn-222, and Ser-264. The dimethylallyl diphosphate site is built by Ser-220, Ser-221, Asn-222, and Ser-264. 4 residues coordinate isopentenyl diphosphate: Ser-220, Ser-221, Asn-222, and Ser-264.

This sequence belongs to the IspH family. [4Fe-4S] cluster serves as cofactor.

It catalyses the reaction isopentenyl diphosphate + 2 oxidized [2Fe-2S]-[ferredoxin] + H2O = (2E)-4-hydroxy-3-methylbut-2-enyl diphosphate + 2 reduced [2Fe-2S]-[ferredoxin] + 2 H(+). The catalysed reaction is dimethylallyl diphosphate + 2 oxidized [2Fe-2S]-[ferredoxin] + H2O = (2E)-4-hydroxy-3-methylbut-2-enyl diphosphate + 2 reduced [2Fe-2S]-[ferredoxin] + 2 H(+). It participates in isoprenoid biosynthesis; dimethylallyl diphosphate biosynthesis; dimethylallyl diphosphate from (2E)-4-hydroxy-3-methylbutenyl diphosphate: step 1/1. The protein operates within isoprenoid biosynthesis; isopentenyl diphosphate biosynthesis via DXP pathway; isopentenyl diphosphate from 1-deoxy-D-xylulose 5-phosphate: step 6/6. In terms of biological role, catalyzes the conversion of 1-hydroxy-2-methyl-2-(E)-butenyl 4-diphosphate (HMBPP) into a mixture of isopentenyl diphosphate (IPP) and dimethylallyl diphosphate (DMAPP). Acts in the terminal step of the DOXP/MEP pathway for isoprenoid precursor biosynthesis. The polypeptide is 4-hydroxy-3-methylbut-2-enyl diphosphate reductase (Neorickettsia sennetsu (strain ATCC VR-367 / Miyayama) (Ehrlichia sennetsu)).